A 292-amino-acid chain; its full sequence is MEITASLVKELRERTGVGMMECKKALSENAGNIDASVEWLRKSGLVKADKKAGRIAAEGRIVVVHDGCKAVLVEINSETDFVAKDSHFLAFAEAVAQAALVAGAADVEALKHVKLPSGETVEETRAAVIAKIGENVRVRRLARIDSANNVAAYVHGGRIGVLVEVKGGDVELARGIAMHVAAMNPPYNKVADVSAEFLEKEKEIELSKMSEKDKSKPADILEKIISGKINKIVKEVTLYGQPYVLNPDQSVEQVVKAAGADVIGFQRMEVGEGIEKIVEDYASEVMKQAGLS.

The interval 79 to 82 (TDFV) is involved in Mg(2+) ion dislocation from EF-Tu.

It belongs to the EF-Ts family.

Its subcellular location is the cytoplasm. Associates with the EF-Tu.GDP complex and induces the exchange of GDP to GTP. It remains bound to the aminoacyl-tRNA.EF-Tu.GTP complex up to the GTP hydrolysis stage on the ribosome. In Xylella fastidiosa (strain Temecula1 / ATCC 700964), this protein is Elongation factor Ts.